A 441-amino-acid polypeptide reads, in one-letter code: Ribosomal protein uS12 methylthiotransferase RimO (441 aa).

The region spanning 6-116 (QKVGIVSLGC…VVAAVHEAAP (111 aa)) is the MTTase N-terminal domain. Cys-15, Cys-51, Cys-80, Cys-147, Cys-151, and Cys-154 together coordinate [4Fe-4S] cluster. Residues 133-370 (LTPRHYAYLK…MAAQQEISER (238 aa)) form the Radical SAM core domain. The 67-residue stretch at 373 to 439 (AQKVGTVIEA…EYDLWGSLAG (67 aa)) folds into the TRAM domain.

This sequence belongs to the methylthiotransferase family. RimO subfamily. [4Fe-4S] cluster is required as a cofactor.

Its subcellular location is the cytoplasm. It catalyses the reaction L-aspartate(89)-[ribosomal protein uS12]-hydrogen + (sulfur carrier)-SH + AH2 + 2 S-adenosyl-L-methionine = 3-methylsulfanyl-L-aspartate(89)-[ribosomal protein uS12]-hydrogen + (sulfur carrier)-H + 5'-deoxyadenosine + L-methionine + A + S-adenosyl-L-homocysteine + 2 H(+). Catalyzes the methylthiolation of an aspartic acid residue of ribosomal protein uS12. The protein is Ribosomal protein uS12 methylthiotransferase RimO of Rhodospirillum rubrum (strain ATCC 11170 / ATH 1.1.1 / DSM 467 / LMG 4362 / NCIMB 8255 / S1).